Here is a 95-residue protein sequence, read N- to C-terminus: Cytosolic calcium-binding protein 3 (95 aa).

Tandem repeats lie at residues 30-35, 39-43, 54-59, 67-71, 75-79, and 90-94. A 6 X 5 AA approximate repeats of V-E-E-K-K region spans residues 30–94; sequence VEDAEKTNED…AEEVAVEKAK (65 aa). The segment at 54–95 is disordered; the sequence is VEEEKKAEEVTETPEEKKTEALEEKQTEVAAAEEVAVEKAKE. Residues 55-80 show a composition bias toward basic and acidic residues; it reads EEEKKAEEVTETPEEKKTEALEEKQT.

Low levels in roots (e.g. in cambium) and barely expressed in stems, shoots, flowers, siliques and leaves.

It localises to the cytoplasm. The protein localises to the cytosol. Binds calcium Ca(2+) and may act as a signal mediator to buffer Ca(2+). In Arabidopsis thaliana (Mouse-ear cress), this protein is Cytosolic calcium-binding protein 3.